Consider the following 448-residue polypeptide: ATP-dependent RNA helicase sub2 (448 aa).

Over residues 19-29 (DAAATTAAPAA) the composition is skewed to low complexity. Positions 19–43 (DAAATTAAPAANGAQDKKGDLTVSG) are disordered. Residues 58–86 (TGFRDFLLKGELLRAITDCGFEHPSEVQQ) carry the Q motif motif. Residues 89-271 (IPTAILNVDV…KKFMRNPLEV (183 aa)) form the Helicase ATP-binding domain. 102-109 (AKSGLGKT) contributes to the ATP binding site. The DECD box motif lies at 211–214 (DECD). The 162-residue stretch at 283 to 444 (GLQQYYIKLS…EYPEGGVDSS (162 aa)) folds into the Helicase C-terminal domain.

Belongs to the DEAD box helicase family. DECD subfamily.

It localises to the nucleus. The catalysed reaction is ATP + H2O = ADP + phosphate + H(+). Its function is as follows. ATP-binding RNA helicase involved in transcription elongation and required for the export of mRNA out of the nucleus. SUB2 also plays a role in pre-mRNA splicing and spliceosome assembly. May be involved in rDNA and telomeric silencing, and maintenance of genome integrity. The chain is ATP-dependent RNA helicase sub2 (sub2) from Aspergillus fumigatus (strain ATCC MYA-4609 / CBS 101355 / FGSC A1100 / Af293) (Neosartorya fumigata).